The sequence spans 202 residues: uncharacterized protein (202 aa).

Residue Lys-136 forms an Isoglutamyl lysine isopeptide (Lys-Gln) (interchain with Q-Cter in protein Pup) linkage.

This is an uncharacterized protein from Mycobacterium tuberculosis (strain CDC 1551 / Oshkosh).